The sequence spans 141 residues: 3-hydroxyacyl-[acyl-carrier-protein] dehydratase FabZ (141 aa).

The active site involves His-49.

Belongs to the thioester dehydratase family. FabZ subfamily.

The protein resides in the cytoplasm. The catalysed reaction is a (3R)-hydroxyacyl-[ACP] = a (2E)-enoyl-[ACP] + H2O. Involved in unsaturated fatty acids biosynthesis. Catalyzes the dehydration of short chain beta-hydroxyacyl-ACPs and long chain saturated and unsaturated beta-hydroxyacyl-ACPs. The sequence is that of 3-hydroxyacyl-[acyl-carrier-protein] dehydratase FabZ from Clostridium acetobutylicum (strain ATCC 824 / DSM 792 / JCM 1419 / IAM 19013 / LMG 5710 / NBRC 13948 / NRRL B-527 / VKM B-1787 / 2291 / W).